A 521-amino-acid polypeptide reads, in one-letter code: Bifunctional purine biosynthesis protein PurH (521 aa).

Positions 1 to 145 (MIKQALISVS…KNHRDVTVVV (145 aa)) constitute an MGS-like domain.

It belongs to the PurH family.

It catalyses the reaction (6R)-10-formyltetrahydrofolate + 5-amino-1-(5-phospho-beta-D-ribosyl)imidazole-4-carboxamide = 5-formamido-1-(5-phospho-D-ribosyl)imidazole-4-carboxamide + (6S)-5,6,7,8-tetrahydrofolate. It carries out the reaction IMP + H2O = 5-formamido-1-(5-phospho-D-ribosyl)imidazole-4-carboxamide. It participates in purine metabolism; IMP biosynthesis via de novo pathway; 5-formamido-1-(5-phospho-D-ribosyl)imidazole-4-carboxamide from 5-amino-1-(5-phospho-D-ribosyl)imidazole-4-carboxamide (10-formyl THF route): step 1/1. The protein operates within purine metabolism; IMP biosynthesis via de novo pathway; IMP from 5-formamido-1-(5-phospho-D-ribosyl)imidazole-4-carboxamide: step 1/1. This Burkholderia cenocepacia (strain ATCC BAA-245 / DSM 16553 / LMG 16656 / NCTC 13227 / J2315 / CF5610) (Burkholderia cepacia (strain J2315)) protein is Bifunctional purine biosynthesis protein PurH.